A 313-amino-acid chain; its full sequence is Putative adhesin P1-like protein MPN_202 (313 aa).

A compositionally biased stretch (low complexity) spans Met-1–Asn-16. The disordered stretch occupies residues Met-1 to Thr-44. Positions Gly-29–Thr-44 are enriched in polar residues.

The protein belongs to the adhesin P1 family.

This is Putative adhesin P1-like protein MPN_202 from Mycoplasma pneumoniae (strain ATCC 29342 / M129 / Subtype 1) (Mycoplasmoides pneumoniae).